Reading from the N-terminus, the 518-residue chain is Probable high-affinity hexose transporter ght7 (518 aa).

Topologically, residues M1–G27 are cytoplasmic. A helical membrane pass occupies residues L28–A48. At D49–R54 the chain is on the extracellular side. Residues L55–V75 form a helical membrane-spanning segment. Topologically, residues P76 to S77 are cytoplasmic. Residues W78–I98 traverse the membrane as a helical segment. Over T99–R112 the chain is Extracellular. Residues G113–I133 form a helical membrane-spanning segment. The Cytoplasmic portion of the chain corresponds to N134–R149. Residues I150–P170 traverse the membrane as a helical segment. Over E171–T236 the chain is Extracellular. A helical transmembrane segment spans residues F237–Y257. Residues G258–Y271 are Cytoplasmic-facing. Residues L272–L292 form a helical membrane-spanning segment. The Extracellular portion of the chain corresponds to E293 to R298. Residues S299 to G319 traverse the membrane as a helical segment. Residues D320–R333 are Cytoplasmic-facing. Residues A334–A354 form a helical membrane-spanning segment. Over P355 to A374 the chain is Extracellular. A helical transmembrane segment spans residues A375–I395. Topologically, residues T396–K402 are cytoplasmic. The helical transmembrane segment at Y403–H423 threads the bilayer. Residues E424–L518 are Extracellular-facing. Polar residues predominate over residues I477–A506. The interval I477–L518 is disordered.

Belongs to the major facilitator superfamily. Sugar transporter (TC 2.A.1.1) family.

It localises to the membrane. The chain is Probable high-affinity hexose transporter ght7 (ght7) from Schizosaccharomyces pombe (strain 972 / ATCC 24843) (Fission yeast).